The following is a 228-amino-acid chain: MQKLKQQVFEANMDLPRYGLVTFTWGNVSAIDRERGLVVIKPSGVAYETMKADDMVVVDMSGKVVEGAYRPSSDTATHLELYRRCPSLGGIVHTHSTHATAWAQAGLAIPALGTTHADYFFGDIPCTRGLSEEEVQGEYELNTGKVIIETLGNAEPLHTPGIVVYQHGPFAWGKDAHDAVHNAVVMEEVAKMAWIARGINPQLNHIDSFLMNKHFMRKHGPNAYYGQK.

Residues 26-27 (GN), 43-44 (SG), and 72-73 (SS) each bind substrate. Residues Asp-74, His-93, and His-95 each coordinate Zn(2+). Asp-118 (proton donor/acceptor) is an active-site residue. His-167 provides a ligand contact to Zn(2+). The active-site Proton donor/acceptor is the Tyr-225.

It belongs to the aldolase class II family. AraD/FucA subfamily. Zn(2+) serves as cofactor.

The catalysed reaction is L-ribulose 5-phosphate = D-xylulose 5-phosphate. The protein operates within cofactor degradation; L-ascorbate degradation; D-xylulose 5-phosphate from L-ascorbate: step 4/4. In terms of biological role, catalyzes the isomerization of L-ribulose 5-phosphate to D-xylulose 5-phosphate. Is involved in the anaerobic L-ascorbate utilization. The polypeptide is L-ribulose-5-phosphate 4-epimerase UlaF (Escherichia coli O8 (strain IAI1)).